Here is a 300-residue protein sequence, read N- to C-terminus: Tyrosine recombinase XerC (300 aa).

The region spanning 2-88 (IQEGKLEQQF…SLRSFYTFLL (87 aa)) is the Core-binding (CB) domain. One can recognise a Tyr recombinase domain in the interval 109–294 (RLPKFFYSEE…TKEHLKSTYM (186 aa)). Catalysis depends on residues arginine 150, lysine 174, histidine 246, arginine 249, and histidine 272. Residue tyrosine 281 is the O-(3'-phospho-DNA)-tyrosine intermediate of the active site.

This sequence belongs to the 'phage' integrase family. XerC subfamily. In terms of assembly, forms a cyclic heterotetrameric complex composed of two molecules of XerC and two molecules of XerD.

It localises to the cytoplasm. Functionally, site-specific tyrosine recombinase, which acts by catalyzing the cutting and rejoining of the recombining DNA molecules. The XerC-XerD complex is essential to convert dimers of the bacterial chromosome into monomers to permit their segregation at cell division. It also contributes to the segregational stability of plasmids. This Listeria monocytogenes serovar 1/2a (strain ATCC BAA-679 / EGD-e) protein is Tyrosine recombinase XerC.